A 120-amino-acid polypeptide reads, in one-letter code: Spermidine export protein MdtJ (120 aa).

The next 4 membrane-spanning stretches (helical) occupy residues 1–21 (MFYW…TLSM), 31–51 (AGFI…SFAV), 54–74 (IALG…ITIF), and 81–101 (EALS…IVLI).

Belongs to the drug/metabolite transporter (DMT) superfamily. Small multidrug resistance (SMR) (TC 2.A.7.1) family. MdtJ subfamily. Forms a complex with MdtI.

The protein localises to the cell inner membrane. In terms of biological role, catalyzes the excretion of spermidine. The chain is Spermidine export protein MdtJ from Salmonella agona (strain SL483).